A 272-amino-acid polypeptide reads, in one-letter code: 3-methyl-2-oxobutanoate hydroxymethyltransferase (272 aa).

The Mg(2+) site is built by Asp43 and Asp82. Residues 43–44, Asp82, and Lys112 contribute to the 3-methyl-2-oxobutanoate site; that span reads DS. Residue Glu114 coordinates Mg(2+). The Proton acceptor role is filled by Glu179.

It belongs to the PanB family. Homodecamer; pentamer of dimers. Mg(2+) is required as a cofactor.

It is found in the cytoplasm. The enzyme catalyses 3-methyl-2-oxobutanoate + (6R)-5,10-methylene-5,6,7,8-tetrahydrofolate + H2O = 2-dehydropantoate + (6S)-5,6,7,8-tetrahydrofolate. It participates in cofactor biosynthesis; (R)-pantothenate biosynthesis; (R)-pantoate from 3-methyl-2-oxobutanoate: step 1/2. Its function is as follows. Catalyzes the reversible reaction in which hydroxymethyl group from 5,10-methylenetetrahydrofolate is transferred onto alpha-ketoisovalerate to form ketopantoate. The chain is 3-methyl-2-oxobutanoate hydroxymethyltransferase from Staphylococcus epidermidis (strain ATCC 35984 / DSM 28319 / BCRC 17069 / CCUG 31568 / BM 3577 / RP62A).